An 84-amino-acid chain; its full sequence is Small ribosomal subunit protein eS27w (84 aa).

The C4-type zinc finger occupies 39 to 61; that stretch reads CQGCFNITTVFSHSQTVVVCGNC.

The protein belongs to the eukaryotic ribosomal protein eS27 family. It depends on Zn(2+) as a cofactor.

This chain is Small ribosomal subunit protein eS27w (RPS27D), found in Arabidopsis thaliana (Mouse-ear cress).